We begin with the raw amino-acid sequence, 435 residues long: Enolase (435 aa).

The substrate site is built by His-155 and Glu-164. Glu-205 (proton donor) is an active-site residue. 3 residues coordinate Mg(2+): Asp-243, Glu-292, and Asp-319. Substrate-binding positions include Glu-292, Asp-319, Lys-344, 371-374 (SHRS), and Lys-395. Catalysis depends on Lys-344, which acts as the Proton acceptor.

Belongs to the enolase family. As to quaternary structure, homooctamer. Requires Mg(2+) as cofactor.

Its subcellular location is the cytoplasm. It localises to the secreted. The protein localises to the cell surface. The catalysed reaction is (2R)-2-phosphoglycerate = phosphoenolpyruvate + H2O. It participates in carbohydrate degradation; glycolysis; pyruvate from D-glyceraldehyde 3-phosphate: step 4/5. Catalyzes the reversible conversion of 2-phosphoglycerate (2-PG) into phosphoenolpyruvate (PEP). It is essential for the degradation of carbohydrates via glycolysis. Functionally, 'Moonlights' as a plasminogen receptor and plasmin activator. Binds host (human) plasminogen in vitro; enhances the activity of host tissue-specific plasminogen activator (tPA). In Streptococcus pyogenes serotype M1, this protein is Enolase.